We begin with the raw amino-acid sequence, 506 residues long: Lysine--tRNA ligase (506 aa).

2 residues coordinate Mg(2+): glutamate 416 and glutamate 423.

The protein belongs to the class-II aminoacyl-tRNA synthetase family. In terms of assembly, homodimer. The cofactor is Mg(2+).

The protein resides in the cytoplasm. It carries out the reaction tRNA(Lys) + L-lysine + ATP = L-lysyl-tRNA(Lys) + AMP + diphosphate. The polypeptide is Lysine--tRNA ligase (Baumannia cicadellinicola subsp. Homalodisca coagulata).